The sequence spans 230 residues: Orotidine 5'-phosphate decarboxylase (230 aa).

Substrate is bound by residues Asp-10, Lys-32, 59–68 (DLKFHDIPRT), Thr-116, Arg-177, Gln-186, Gly-206, and Arg-207. Lys-61 serves as the catalytic Proton donor.

Belongs to the OMP decarboxylase family. Type 1 subfamily. Homodimer.

The enzyme catalyses orotidine 5'-phosphate + H(+) = UMP + CO2. The protein operates within pyrimidine metabolism; UMP biosynthesis via de novo pathway; UMP from orotate: step 2/2. In terms of biological role, catalyzes the decarboxylation of orotidine 5'-monophosphate (OMP) to uridine 5'-monophosphate (UMP). The chain is Orotidine 5'-phosphate decarboxylase from Methylacidiphilum infernorum (isolate V4) (Methylokorus infernorum (strain V4)).